We begin with the raw amino-acid sequence, 177 residues long: Large ribosomal subunit protein uL6 (177 aa).

Belongs to the universal ribosomal protein uL6 family. As to quaternary structure, part of the 50S ribosomal subunit.

In terms of biological role, this protein binds to the 23S rRNA, and is important in its secondary structure. It is located near the subunit interface in the base of the L7/L12 stalk, and near the tRNA binding site of the peptidyltransferase center. This is Large ribosomal subunit protein uL6 from Methylococcus capsulatus (strain ATCC 33009 / NCIMB 11132 / Bath).